Consider the following 201-residue polypeptide: Protein Thf1 (201 aa).

A coiled-coil region spans residues I174–L201.

It belongs to the THF1 family.

Functionally, may be involved in photosynthetic membrane biogenesis. The protein is Protein Thf1 of Prochlorococcus marinus (strain MIT 9312).